Consider the following 34-residue polypeptide: Photosystem II reaction center protein M (34 aa).

The helical transmembrane segment at 5-25 (ILAFIATALFILVPTAFLLII) threads the bilayer.

It belongs to the PsbM family. PSII is composed of 1 copy each of membrane proteins PsbA, PsbB, PsbC, PsbD, PsbE, PsbF, PsbH, PsbI, PsbJ, PsbK, PsbL, PsbM, PsbT, PsbX, PsbY, PsbZ, Psb30/Ycf12, at least 3 peripheral proteins of the oxygen-evolving complex and a large number of cofactors. It forms dimeric complexes.

The protein localises to the plastid. It is found in the chloroplast thylakoid membrane. In terms of biological role, one of the components of the core complex of photosystem II (PSII). PSII is a light-driven water:plastoquinone oxidoreductase that uses light energy to abstract electrons from H(2)O, generating O(2) and a proton gradient subsequently used for ATP formation. It consists of a core antenna complex that captures photons, and an electron transfer chain that converts photonic excitation into a charge separation. This subunit is found at the monomer-monomer interface. This is Photosystem II reaction center protein M from Ceratophyllum demersum (Rigid hornwort).